A 131-amino-acid chain; its full sequence is Large ribosomal subunit protein eL32 (131 aa).

It belongs to the eukaryotic ribosomal protein eL32 family.

This is Large ribosomal subunit protein eL32 (rpl32e) from Sulfurisphaera tokodaii (strain DSM 16993 / JCM 10545 / NBRC 100140 / 7) (Sulfolobus tokodaii).